The primary structure comprises 422 residues: UDP-N-acetylglucosamine 1-carboxyvinyltransferase (422 aa).

23–24 (KN) serves as a coordination point for phosphoenolpyruvate. Arg92 serves as a coordination point for UDP-N-acetyl-alpha-D-glucosamine. Cys116 acts as the Proton donor in catalysis. 2-(S-cysteinyl)pyruvic acid O-phosphothioketal is present on Cys116. Residues 121–125 (RPVDL), 161–165 (KVSVG), Asp306, and Ile328 each bind UDP-N-acetyl-alpha-D-glucosamine.

The protein belongs to the EPSP synthase family. MurA subfamily.

The protein localises to the cytoplasm. It catalyses the reaction phosphoenolpyruvate + UDP-N-acetyl-alpha-D-glucosamine = UDP-N-acetyl-3-O-(1-carboxyvinyl)-alpha-D-glucosamine + phosphate. It participates in cell wall biogenesis; peptidoglycan biosynthesis. Cell wall formation. Adds enolpyruvyl to UDP-N-acetylglucosamine. This Aliivibrio fischeri (strain MJ11) (Vibrio fischeri) protein is UDP-N-acetylglucosamine 1-carboxyvinyltransferase.